We begin with the raw amino-acid sequence, 160 residues long: 3-hydroxyacyl-[acyl-carrier-protein] dehydratase FabZ (160 aa).

H58 is an active-site residue.

It belongs to the thioester dehydratase family. FabZ subfamily.

The protein resides in the cytoplasm. The catalysed reaction is a (3R)-hydroxyacyl-[ACP] = a (2E)-enoyl-[ACP] + H2O. Its function is as follows. Involved in unsaturated fatty acids biosynthesis. Catalyzes the dehydration of short chain beta-hydroxyacyl-ACPs and long chain saturated and unsaturated beta-hydroxyacyl-ACPs. The sequence is that of 3-hydroxyacyl-[acyl-carrier-protein] dehydratase FabZ from Ruegeria sp. (strain TM1040) (Silicibacter sp.).